Here is a 468-residue protein sequence, read N- to C-terminus: 3-isopropylmalate dehydratase large subunit (468 aa).

[4Fe-4S] cluster is bound by residues Cys-345, Cys-405, and Cys-408.

Belongs to the aconitase/IPM isomerase family. LeuC type 1 subfamily. As to quaternary structure, heterodimer of LeuC and LeuD. Requires [4Fe-4S] cluster as cofactor.

It catalyses the reaction (2R,3S)-3-isopropylmalate = (2S)-2-isopropylmalate. It functions in the pathway amino-acid biosynthesis; L-leucine biosynthesis; L-leucine from 3-methyl-2-oxobutanoate: step 2/4. Catalyzes the isomerization between 2-isopropylmalate and 3-isopropylmalate, via the formation of 2-isopropylmaleate. The sequence is that of 3-isopropylmalate dehydratase large subunit from Oceanobacillus iheyensis (strain DSM 14371 / CIP 107618 / JCM 11309 / KCTC 3954 / HTE831).